The chain runs to 288 residues: Homeobox protein Hox-B4a (288 aa).

The disordered stretch occupies residues 10-136 (SNYVDPKFPP…ASSPASTRKD (127 aa)). The segment covering 118–132 (CGQTPHSQGASSPAS) has biased composition (polar residues). An Antp-type hexapeptide motif is present at residues 139-144 (VYPWMK). A DNA-binding region (homeobox) is located at residues 160-219 (PKRSRTAYTRQQVLELEKEFHYNRYLTRRRRVEIAHTLCLSERQIKIWFQNRRMKWKKDH).

Belongs to the Antp homeobox family. Deformed subfamily.

It localises to the nucleus. Sequence-specific transcription factor which is part of a developmental regulatory system that provides cells with specific positional identities on the anterior-posterior axis. The polypeptide is Homeobox protein Hox-B4a (hoxb4a) (Takifugu rubripes (Japanese pufferfish)).